A 72-amino-acid polypeptide reads, in one-letter code: Small ribosomal subunit protein bS18 (72 aa).

The protein belongs to the bacterial ribosomal protein bS18 family. As to quaternary structure, part of the 30S ribosomal subunit. Forms a tight heterodimer with protein bS6.

Its function is as follows. Binds as a heterodimer with protein bS6 to the central domain of the 16S rRNA, where it helps stabilize the platform of the 30S subunit. This is Small ribosomal subunit protein bS18 from Francisella tularensis subsp. novicida (strain U112).